We begin with the raw amino-acid sequence, 859 residues long: Leucine--tRNA ligase (859 aa).

The 'HIGH' region signature appears at 42-52 (PYPSGRLHMGH). The 'KMSKS' region signature appears at 618 to 622 (KMSKS). Lys621 lines the ATP pocket.

Belongs to the class-I aminoacyl-tRNA synthetase family.

It localises to the cytoplasm. The enzyme catalyses tRNA(Leu) + L-leucine + ATP = L-leucyl-tRNA(Leu) + AMP + diphosphate. The sequence is that of Leucine--tRNA ligase from Shewanella baltica (strain OS195).